The primary structure comprises 190 residues: dTTP/UTP pyrophosphatase (190 aa).

The Proton acceptor role is filled by aspartate 70.

The protein belongs to the Maf family. YhdE subfamily. Requires a divalent metal cation as cofactor.

It localises to the cytoplasm. The enzyme catalyses dTTP + H2O = dTMP + diphosphate + H(+). It catalyses the reaction UTP + H2O = UMP + diphosphate + H(+). Functionally, nucleoside triphosphate pyrophosphatase that hydrolyzes dTTP and UTP. May have a dual role in cell division arrest and in preventing the incorporation of modified nucleotides into cellular nucleic acids. This is dTTP/UTP pyrophosphatase from Gloeobacter violaceus (strain ATCC 29082 / PCC 7421).